A 696-amino-acid chain; its full sequence is PWWP domain-containing DNA repair factor 3B (696 aa).

2 stretches are compositionally biased toward polar residues: residues 119–128 (QNVPQKQSDS) and 290–300 (CLDTSQNQPSM). Disordered regions lie at residues 119-143 (QNVP…DLPG) and 278-303 (NIED…MESE). Ser-128 carries the phosphoserine modification. The 62-residue stretch at 392–453 (TGMIVWFKYQ…KKFDCKEKQM (62 aa)) folds into the PWWP domain.

It belongs to the PWWP3A family.

This chain is PWWP domain-containing DNA repair factor 3B, found in Homo sapiens (Human).